The following is an 88-amino-acid chain: Small ribosomal subunit protein uS15 (88 aa).

It belongs to the universal ribosomal protein uS15 family. In terms of assembly, part of the 30S ribosomal subunit. Forms a bridge to the 50S subunit in the 70S ribosome, contacting the 23S rRNA.

In terms of biological role, one of the primary rRNA binding proteins, it binds directly to 16S rRNA where it helps nucleate assembly of the platform of the 30S subunit by binding and bridging several RNA helices of the 16S rRNA. Forms an intersubunit bridge (bridge B4) with the 23S rRNA of the 50S subunit in the ribosome. This is Small ribosomal subunit protein uS15 from Francisella tularensis subsp. holarctica (strain LVS).